The primary structure comprises 404 residues: MRNINVQLNPLSDIEKLQVELVERKGLGHPDYIADAVAEEASRKLSLYYLKKYGVILHHNLDKTLVVGGQATPRFKGGDVIQPIYIVVAGRATTEVKTESGIEQIPVGTIIIESVKEWIRNNFRYLDAEKHLIVDYKIGKGSTDLVGIFEAGKRVPLSNDTSFGVGFAPFTKLEKLVYETERHLNSKQFKAKLPEVGEDIKVMGLRRGNEVDLTIAMATISELIEDVNHYINVKEQAKNEILDLASKIAPDYDVRIYVNTGDKIDKNILYLTVTGTSAEHGDDGMTGRGNRGVGLITPMRPMSLEATAGKNPVNHVGKLYNVLANLIANKIAQEVKDVKFSQVQVLGQIGRPIDDPLIANVDVITYDGKLNDETKNEISGIVDEMLSSFNKLTELILEGKATLF.

139 to 144 is an ATP binding site; sequence GKGSTD.

The protein belongs to the AdoMet synthase 2 family. Mg(2+) is required as a cofactor.

The catalysed reaction is L-methionine + ATP + H2O = S-adenosyl-L-methionine + phosphate + diphosphate. Its pathway is amino-acid biosynthesis; S-adenosyl-L-methionine biosynthesis; S-adenosyl-L-methionine from L-methionine: step 1/1. Its function is as follows. Catalyzes the formation of S-adenosylmethionine from methionine and ATP. This chain is S-adenosylmethionine synthase, found in Saccharolobus islandicus (strain L.S.2.15 / Lassen #1) (Sulfolobus islandicus).